The following is a 496-amino-acid chain: Lysine--tRNA ligase (496 aa).

E408 and E415 together coordinate Mg(2+).

The protein belongs to the class-II aminoacyl-tRNA synthetase family. Homodimer. It depends on Mg(2+) as a cofactor.

The protein resides in the cytoplasm. It carries out the reaction tRNA(Lys) + L-lysine + ATP = L-lysyl-tRNA(Lys) + AMP + diphosphate. This Legionella pneumophila (strain Paris) protein is Lysine--tRNA ligase.